A 230-amino-acid chain; its full sequence is 7-cyano-7-deazaguanine synthase (230 aa).

9-19 lines the ATP pocket; it reads YSGGLDSTTCL. Positions 190, 200, 203, and 206 each coordinate Zn(2+).

This sequence belongs to the QueC family. The cofactor is Zn(2+).

The catalysed reaction is 7-carboxy-7-deazaguanine + NH4(+) + ATP = 7-cyano-7-deazaguanine + ADP + phosphate + H2O + H(+). It participates in purine metabolism; 7-cyano-7-deazaguanine biosynthesis. Its function is as follows. Catalyzes the ATP-dependent conversion of 7-carboxy-7-deazaguanine (CDG) to 7-cyano-7-deazaguanine (preQ(0)). The polypeptide is 7-cyano-7-deazaguanine synthase (Syntrophotalea carbinolica (strain DSM 2380 / NBRC 103641 / GraBd1) (Pelobacter carbinolicus)).